The following is a 659-amino-acid chain: DNA mismatch repair protein MutL (659 aa).

Positions 338 to 459 (GAPRGASKPG…DTTSERDSLP (122 aa)) are disordered. The span at 352–362 (SPEHSPTDRDA) shows a compositional bias: basic and acidic residues. Positions 374 to 391 (SDGNGQRTAASGATSESP) are enriched in polar residues.

This sequence belongs to the DNA mismatch repair MutL/HexB family.

Functionally, this protein is involved in the repair of mismatches in DNA. It is required for dam-dependent methyl-directed DNA mismatch repair. May act as a 'molecular matchmaker', a protein that promotes the formation of a stable complex between two or more DNA-binding proteins in an ATP-dependent manner without itself being part of a final effector complex. The polypeptide is DNA mismatch repair protein MutL (Halobacterium salinarum (strain ATCC 29341 / DSM 671 / R1)).